A 268-amino-acid chain; its full sequence is Bis(5'-nucleosyl)-tetraphosphatase, symmetrical (268 aa).

It belongs to the Ap4A hydrolase family.

The catalysed reaction is P(1),P(4)-bis(5'-adenosyl) tetraphosphate + H2O = 2 ADP + 2 H(+). Hydrolyzes diadenosine 5',5'''-P1,P4-tetraphosphate to yield ADP. The polypeptide is Bis(5'-nucleosyl)-tetraphosphatase, symmetrical (Vibrio parahaemolyticus serotype O3:K6 (strain RIMD 2210633)).